The primary structure comprises 251 residues: L-xylulose reductase (251 aa).

13 to 42 (LVTGASQGIGKEICLSLAKAGAQVIAFARN) provides a ligand contact to NADP(+). Ser-143 serves as a coordination point for substrate. Tyr-156 acts as the Proton acceptor in catalysis. Lys-160 lines the NADP(+) pocket.

It belongs to the short-chain dehydrogenases/reductases (SDR) family. As to quaternary structure, homotetramer. As to expression, expressed in intestine, gonad and spermatids (at protein level). Expressed in intestine, uterine seam, gonadal sheath cells, spermathecal-uterus valve and spermatids.

It is found in the cell membrane. It catalyses the reaction xylitol + NADP(+) = L-xylulose + NADPH + H(+). Strongly inhibited by 10% dimethyl sulfoxide. In terms of biological role, catalyzes the NADPH-dependent reduction of L-xylulose, D-xylulose, L-(+) erythrulose, D-erythrose, D-threose, L-ribulose, 1,4-dibromo-2,3-butanedione and 2,3-heptanedione. Also active against isatin, 9,10-phenanthrenequinone, menadione, 2,3-hexaenadione and 3,4-hexahenadione. No activity observed when tested using NADH rather than NADPH. This chain is L-xylulose reductase, found in Caenorhabditis elegans.